The primary structure comprises 335 residues: Biotin synthase (335 aa).

One can recognise a Radical SAM core domain in the interval 51-281 (YRVQLASLLS…RSRVRLSAGR (231 aa)). [4Fe-4S] cluster-binding residues include Cys-66, Cys-70, and Cys-73. Residues Cys-112, Cys-144, Cys-204, and Arg-276 each coordinate [2Fe-2S] cluster.

This sequence belongs to the radical SAM superfamily. Biotin synthase family. As to quaternary structure, homodimer. The cofactor is [4Fe-4S] cluster. [2Fe-2S] cluster is required as a cofactor.

The enzyme catalyses (4R,5S)-dethiobiotin + (sulfur carrier)-SH + 2 reduced [2Fe-2S]-[ferredoxin] + 2 S-adenosyl-L-methionine = (sulfur carrier)-H + biotin + 2 5'-deoxyadenosine + 2 L-methionine + 2 oxidized [2Fe-2S]-[ferredoxin]. It participates in cofactor biosynthesis; biotin biosynthesis; biotin from 7,8-diaminononanoate: step 2/2. Its function is as follows. Catalyzes the conversion of dethiobiotin (DTB) to biotin by the insertion of a sulfur atom into dethiobiotin via a radical-based mechanism. This Prochlorococcus marinus (strain MIT 9303) protein is Biotin synthase.